Consider the following 58-residue polypeptide: Photosystem II reaction center protein K (58 aa).

Residues 1-21 (MFNAYLDTVLDLSANGTVILA) constitute a propeptide that is removed on maturation. The chain crosses the membrane as a helical span at residues 29-49 (IFDPIVDVMPIIPVFFLLLAF).

The protein belongs to the PsbK family. PSII is composed of 1 copy each of membrane proteins PsbA, PsbB, PsbC, PsbD, PsbE, PsbF, PsbH, PsbI, PsbJ, PsbK, PsbL, PsbM, PsbT, PsbX, PsbY, PsbZ, Psb30/Ycf12, at least 3 peripheral proteins of the oxygen-evolving complex and a large number of cofactors. It forms dimeric complexes.

Its subcellular location is the plastid. It localises to the chloroplast thylakoid membrane. One of the components of the core complex of photosystem II (PSII). PSII is a light-driven water:plastoquinone oxidoreductase that uses light energy to abstract electrons from H(2)O, generating O(2) and a proton gradient subsequently used for ATP formation. It consists of a core antenna complex that captures photons, and an electron transfer chain that converts photonic excitation into a charge separation. This Staurastrum punctulatum (Green alga) protein is Photosystem II reaction center protein K.